The following is a 558-amino-acid chain: SPATS2-like protein (558 aa).

At Ala-2 the chain carries N-acetylalanine. The span at 63 to 79 (GKKKNNKRKRSKSKQHQ) shows a compositional bias: basic residues. The interval 63–204 (GKKKNNKRKR…SPVKSNAPAA (142 aa)) is disordered. Composition is skewed to basic and acidic residues over residues 80–92 (GNKDAKDKVERPE) and 110–142 (GCEKDSSSPDSTREKLALTPREKKISILEEPPR). Ser-120 carries the phosphoserine modification. Positions 279 to 344 (KEEAMDILTA…ARFSCDIEQL (66 aa)) form a coiled coil. Disordered stretches follow at residues 385 to 406 (GNFARKSSGHNKPSEGKAANPK) and 421 to 514 (TMPT…RQHA). Over residues 421–433 (TMPTNKQQNGPSS) the composition is skewed to polar residues. The segment covering 469-485 (HEHRRQPHNGFRPKNKG) has biased composition (basic residues).

This sequence belongs to the SPATS2 family.

Its subcellular location is the cytoplasm. It is found in the nucleus. It localises to the nucleolus. The polypeptide is SPATS2-like protein (Spats2l) (Mus musculus (Mouse)).